A 306-amino-acid chain; its full sequence is Acetyl-coenzyme A carboxylase carboxyl transferase subunit beta (306 aa).

Residues 25-294 (VWTKCDSCGQ…PQDPLPHEPR (270 aa)) form the CoA carboxyltransferase N-terminal domain. Residues C29, C32, C48, and C51 each coordinate Zn(2+). A C4-type zinc finger spans residues 29-51 (CDSCGQVLYRAELERNLEVCPKC). The segment at 281 to 306 (NRPQPQDPLPHEPRPDAVPEDHQDEV) is disordered. Residues 289–306 (LPHEPRPDAVPEDHQDEV) are compositionally biased toward basic and acidic residues.

The protein belongs to the AccD/PCCB family. As to quaternary structure, acetyl-CoA carboxylase is a heterohexamer composed of biotin carboxyl carrier protein (AccB), biotin carboxylase (AccC) and two subunits each of ACCase subunit alpha (AccA) and ACCase subunit beta (AccD). Zn(2+) serves as cofactor.

The protein resides in the cytoplasm. The enzyme catalyses N(6)-carboxybiotinyl-L-lysyl-[protein] + acetyl-CoA = N(6)-biotinyl-L-lysyl-[protein] + malonyl-CoA. The protein operates within lipid metabolism; malonyl-CoA biosynthesis; malonyl-CoA from acetyl-CoA: step 1/1. In terms of biological role, component of the acetyl coenzyme A carboxylase (ACC) complex. Biotin carboxylase (BC) catalyzes the carboxylation of biotin on its carrier protein (BCCP) and then the CO(2) group is transferred by the transcarboxylase to acetyl-CoA to form malonyl-CoA. The polypeptide is Acetyl-coenzyme A carboxylase carboxyl transferase subunit beta (Sodalis glossinidius (strain morsitans)).